The chain runs to 255 residues: Vitamin B12 import ATP-binding protein BtuD (255 aa).

The region spanning 2-240 (MRVKHIAVGS…AGLAEVFKTQ (239 aa)) is the ABC transporter domain. 30-37 (GPNGSGKS) lines the ATP pocket.

It belongs to the ABC transporter superfamily. Vitamin B12 importer (TC 3.A.1.13.1) family. The complex is composed of two ATP-binding proteins (BtuD), two transmembrane proteins (BtuC) and a solute-binding protein (BtuF).

The protein resides in the cell inner membrane. It carries out the reaction an R-cob(III)alamin(out) + ATP + H2O = an R-cob(III)alamin(in) + ADP + phosphate + H(+). Part of the ABC transporter complex BtuCDF involved in vitamin B12 import. Responsible for energy coupling to the transport system. In Vibrio parahaemolyticus serotype O3:K6 (strain RIMD 2210633), this protein is Vitamin B12 import ATP-binding protein BtuD.